The primary structure comprises 1225 residues: Hyphally regulated cell wall protein 4 (1225 aa).

The N-terminal stretch at 1–20 (MFSYSQAIRFIIFLLPICLT) is a signal peptide. Asn-97, Asn-200, Asn-488, Asn-595, Asn-634, and Asn-694 each carry an N-linked (GlcNAc...) asparagine glycan. The interval 832–852 (DLDLPDDTTFTPSQSSSTTVP) is disordered. The span at 838–852 (DTTFTPSQSSSTTVP) shows a compositional bias: low complexity. 2 N-linked (GlcNAc...) asparagine glycosylation sites follow: Asn-933 and Asn-1035. The disordered stretch occupies residues 1049–1114 (AYTQQDASTQ…NSHFEGTFIS (66 aa)). 4 N-linked (GlcNAc...) asparagine glycosylation sites follow: Asn-1133, Asn-1150, Asn-1182, and Asn-1193. Ser-1195 is lipidated: GPI-anchor amidated serine. Residues 1196–1225 (GLISKSESVVLLIRPVMIFVFLAICVVIML) constitute a propeptide, removed in mature form.

Belongs to the HYR1/IFF family. Post-translationally, the GPI-anchor is attached to the protein in the endoplasmic reticulum and serves to target the protein to the cell surface. There, the glucosamine-inositol phospholipid moiety is cleaved off and the GPI-modified mannoprotein is covalently attached via its lipidless GPI glycan remnant to the 1,6-beta-glucan of the outer cell wall layer.

It localises to the secreted. Its subcellular location is the cell wall. The protein localises to the membrane. Functionally, GPI-anchored cell wall protein involved in cell wall organization, hyphal growth, as well as in host-fungal interaction and virulence. This Candida albicans (strain SC5314 / ATCC MYA-2876) (Yeast) protein is Hyphally regulated cell wall protein 4 (HYR4).